The sequence spans 646 residues: MRLTTKFSAFVTLLTGLTIFVTLLGCSLSFYNAIQYKFSHRVQAVATAIDTHLVSNDFSVLRPQITELMMSADIVRVDLLHGDKQVYTLARNGSYRPVGSSDLFRELSVPLIKHPGMSLRLVYQDPMGNYFHSLMTTAPLTGAIGFIIVMLFLAVRWLQRQLAGQELLETRATRILNGERGSNVLGTIYEWPPRTSSALDTLLREIQNAREQHSRLDTLIRSYAAQDVKTGLNNRLFFDNQLATLLEDQEKVGTHGIVMMIRLPDFNMLSDTWGHSQVEEQFFTLTNLLSTFMMRYPGALLARYHRSDFAALLPHRTLKEAESIAGQLIKAVDTLPNNKMLDRDDMIHIGICAWRSGQDTEQVMEHAESATRNAGLQGGNSWAIYDDSLPEKGRGNVRWRTLIEQMLSRGGPRLYQKPAVTREGQVHHRELMCRIFDGNEEVSSAEYMPMVLQFGLSEEYDRLQISRLIPLLRYWPEENLAIQVTVESLIRPRFQRWLRDTLMQCEKSQRKRIIIELAEADVGQHISRLQPVIRLVNALGVRVAVNQAGLTLVSTSWIKELNVELLKLHPGLVRNIEKRTENQLLVQSLVEACSGTSTQVYATGVRSRSEWQTLIQRGVTGGQGDFFASSQPLDTNVKKYSQRYSV.

2 consecutive transmembrane segments (helical) span residues 10–30 (FVTLLTGLTIFVTLLGCSLSF) and 135–155 (MTTAPLTGAIGFIIVMLFLAV). The interval 152–219 (FLAVRWLQRQ…REQHSRLDTL (68 aa)) is HAMP-like. Residues 194–224 (RTSSALDTLLREIQNAREQHSRLDTLIRSYA) adopt a coiled-coil conformation. The 134-residue stretch at 254–387 (THGIVMMIRL…GGNSWAIYDD (134 aa)) folds into the GGDEF domain. Residues 396-644 (NVRWRTLIEQ…TNVKKYSQRY (249 aa)) enclose the EAL domain.

The protein resides in the cell membrane. In terms of biological role, serves as a specificity factor required for RNase E-mediated decay of the small global regulatory RNAs CsrB and CsrC, it is probably not a nuclease. Nor does its activity involve c-di-GMP, despite its domain composition. Positively modulates motility gene expression, is also required for curli expression. The sequence is that of RNase E specificity factor CsrD (csrD) from Escherichia coli (strain K12).